The chain runs to 513 residues: Glutamate--tRNA ligase 2 (513 aa).

The 'HIGH' region signature appears at 11–21; it reads PSPSGFLHIGS. Positions 240–244 match the 'KMSKS' region motif; sequence KLSKR. K243 contacts ATP.

It belongs to the class-I aminoacyl-tRNA synthetase family. Glutamate--tRNA ligase type 1 subfamily. Monomer.

The protein resides in the cytoplasm. The catalysed reaction is tRNA(Glu) + L-glutamate + ATP = L-glutamyl-tRNA(Glu) + AMP + diphosphate. Functionally, catalyzes the attachment of glutamate to tRNA(Glu) in a two-step reaction: glutamate is first activated by ATP to form Glu-AMP and then transferred to the acceptor end of tRNA(Glu). The protein is Glutamate--tRNA ligase 2 of Rickettsia massiliae (strain Mtu5).